Here is a 269-residue protein sequence, read N- to C-terminus: Pertussis toxin subunit 1 homolog (269 aa).

A signal peptide spans 1–34 (MRCTRAIRQTARTGWLTWLAILAVTAPVTSPAWA).

Belongs to the bacterial exotoxin subunit A family.

The chain is Pertussis toxin subunit 1 homolog (ptxA) from Bordetella bronchiseptica (strain ATCC BAA-588 / NCTC 13252 / RB50) (Alcaligenes bronchisepticus).